The following is a 2451-amino-acid chain: Reducing polyketide synthase 8 (2451 aa).

Residues 12-434 (NEPIAIVGSS…GTNAHAILEA (423 aa)) form the Ketosynthase family 3 (KS3) domain. Residues Cys174, His313, and His354 each act as for beta-ketoacyl synthase activity in the active site. The Malonyl-CoA:ACP transacylase (MAT) domain maps to 538-846 (VFTGQGAQWA…GPATETINNM (309 aa)). The interval 940 to 1085 (HQLLGSASTF…GFLRIELGAP (146 aa)) is N-terminal hotdog fold. A PKS/mFAS DH domain is found at 940–1254 (HQLLGSASTF…LLNLPGSLRS (315 aa)). His974 functions as the Proton acceptor; for dehydratase activity in the catalytic mechanism. Residues 1100–1254 (LIPLDVEELY…LLNLPGSLRS (155 aa)) are C-terminal hotdog fold. The active-site Proton donor; for dehydratase activity is Asp1160. The segment at 1294-1590 (LVLFYCQKVL…QHFCSVMLSQ (297 aa)) is methyltransfrase (MT) domain. Positions 2088 to 2266 (TYLLLGLAGD…PGCVVHIGGV (179 aa)) constitute a Ketoreductase (KR) domain. One can recognise a Carrier domain in the interval 2366-2451 (DACLDLLLGG…LAIWRKQVKA (86 aa)). Ser2404 carries the O-(pantetheine 4'-phosphoryl)serine modification.

The cofactor is pantetheine 4'-phosphate.

It functions in the pathway secondary metabolite biosynthesis. Its function is as follows. Reducing polyketide synthase; part of the gene cluster that mediates the biosynthesis of fusamarins, isocoumarin derivatives that show moderate cytotoxicity with IC(50) values between 1 and 50 uM. The polyketide synthase FMN1 probably synthesizes two different polyketides, a tetra- and a pentaketide, containinga varying number of double bonds depending on the selective actions of the trans-enoyl reductase FMN2. Chain fusion will presumably be mediated by the KS domain before finally offloading is catalyzed by the alpha/beta hydrolase fold enzyme FMN3. This Fusarium mangiferae (Mango malformation disease fungus) protein is Reducing polyketide synthase 8.